The primary structure comprises 193 residues: Coiled-coil domain-containing protein 184 (193 aa).

Residues 39-68 adopt a coiled-coil conformation; the sequence is GMKELMEHLKAQLQALFEDVRAMRGALDEQ. The segment at 101-176 is disordered; that stretch reads GLGVAGGKGS…LGENGPLVEP (76 aa). Residues 135 to 146 are compositionally biased toward acidic residues; that stretch reads PDEEDEEEEEEK.

The polypeptide is Coiled-coil domain-containing protein 184 (Ccdc184) (Rattus norvegicus (Rat)).